We begin with the raw amino-acid sequence, 329 residues long: Beta-ketoacyl-[acyl-carrier-protein] synthase III (329 aa).

Residues Cys114 and His255 contribute to the active site. An ACP-binding region spans residues 256–260 (QANQR). The active site involves Asn285.

It belongs to the thiolase-like superfamily. FabH family. Homodimer.

Its subcellular location is the cytoplasm. It carries out the reaction malonyl-[ACP] + acetyl-CoA + H(+) = 3-oxobutanoyl-[ACP] + CO2 + CoA. It functions in the pathway lipid metabolism; fatty acid biosynthesis. Its function is as follows. Catalyzes the condensation reaction of fatty acid synthesis by the addition to an acyl acceptor of two carbons from malonyl-ACP. Catalyzes the first condensation reaction which initiates fatty acid synthesis and may therefore play a role in governing the total rate of fatty acid production. Possesses both acetoacetyl-ACP synthase and acetyl transacylase activities. Its substrate specificity determines the biosynthesis of branched-chain and/or straight-chain of fatty acids. This chain is Beta-ketoacyl-[acyl-carrier-protein] synthase III, found in Thermosynechococcus vestitus (strain NIES-2133 / IAM M-273 / BP-1).